Here is a 178-residue protein sequence, read N- to C-terminus: Large ribosomal subunit protein uL6 (178 aa).

The protein belongs to the universal ribosomal protein uL6 family. As to quaternary structure, part of the 50S ribosomal subunit.

In terms of biological role, this protein binds to the 23S rRNA, and is important in its secondary structure. It is located near the subunit interface in the base of the L7/L12 stalk, and near the tRNA binding site of the peptidyltransferase center. The polypeptide is Large ribosomal subunit protein uL6 (Streptococcus pneumoniae serotype 4 (strain ATCC BAA-334 / TIGR4)).